A 1219-amino-acid polypeptide reads, in one-letter code: NHS-like protein 2 (1219 aa).

Disordered regions lie at residues 162 to 181, 288 to 321, 336 to 364, 400 to 423, 474 to 591, 669 to 741, 854 to 938, 979 to 1003, 1033 to 1087, and 1121 to 1197; these read FRSS…QSAK, FSNF…HSAP, FPSL…SDHP, TPSA…GNSW, GLLA…ELVL, QGSS…SASV, GAEE…STAS, IGLQ…KKPS, LEED…DKTA, and WKET…KTTN. The segment covering 288–312 has biased composition (polar residues); sequence FSNFSQRDQGHSSSPTGSLARSATS. Over residues 352–364 the composition is skewed to basic and acidic residues; that stretch reads GDAHQARSASDHP. Position 499 is a phosphoserine (serine 499). The span at 526 to 545 shows a compositional bias: polar residues; that stretch reads ASTSSEGSNSTDNIAALSTE. The segment covering 549-567 has biased composition (basic residues); that stretch reads RHRRQRSKSISLKKAKKKP. Serine 575 is subject to Phosphoserine. A compositionally biased stretch (low complexity) spans 674–687; sequence SLASPSTSRATTPS. Phosphoserine is present on serine 690. 2 stretches are compositionally biased toward polar residues: residues 708 to 729 and 897 to 908; these read MSPS…SMSL and TSPTMAMASRSS. Position 1048 is a phosphoserine (serine 1048). Residues 1076 to 1087 show a composition bias toward basic and acidic residues; that stretch reads AEEKSLISDKTA. Over residues 1131-1144 the composition is skewed to polar residues; the sequence is SKPSSHSPVKNTAD. Residues 1145–1160 show a composition bias toward low complexity; it reads SPTGEAAAAPGPSSSA. The residue at position 1208 (serine 1208) is a Phosphoserine.

The protein belongs to the NHS family.

This Mus musculus (Mouse) protein is NHS-like protein 2.